We begin with the raw amino-acid sequence, 224 residues long: Adenylate kinase (224 aa).

ATP is bound at residue 10-15; that stretch reads GSGKGT. Positions 30 to 59 are NMP; the sequence is ESGAIFRENISKGTELGAKAKEYIDRGDLV. Residues serine 31, arginine 36, 57–59, 85–88, and glutamine 92 contribute to the AMP site; these read DLV and GFPR. Residues 126-165 are LID; sequence GRRLCVNDNNHPNNIFIDAIKPDGDKCRVCGGELKTRSDD. Position 127 (arginine 127) interacts with ATP. AMP-binding residues include arginine 162 and arginine 174. Proline 211 serves as a coordination point for ATP.

Belongs to the adenylate kinase family. As to quaternary structure, monomer.

The protein resides in the cytoplasm. The enzyme catalyses AMP + ATP = 2 ADP. It participates in purine metabolism; AMP biosynthesis via salvage pathway; AMP from ADP: step 1/1. Its function is as follows. Catalyzes the reversible transfer of the terminal phosphate group between ATP and AMP. Plays an important role in cellular energy homeostasis and in adenine nucleotide metabolism. The protein is Adenylate kinase of Desulfosudis oleivorans (strain DSM 6200 / JCM 39069 / Hxd3) (Desulfococcus oleovorans).